The primary structure comprises 388 residues: Purple acid phosphatase 19 (388 aa).

The first 24 residues, 1-24 (MGLNHLTLVCSAIALLSIFVVSQA), serve as a signal peptide directing secretion. N-linked (GlcNAc...) asparagine glycans are attached at residues asparagine 97 and asparagine 111. Residues aspartate 145 and tyrosine 148 each contribute to the Fe cation site. Aspartate 145 provides a ligand contact to Zn(2+). Zn(2+) is bound at residue asparagine 182. Position 182 (asparagine 182) interacts with substrate. N-linked (GlcNAc...) asparagine glycosylation is present at asparagine 226. Residue histidine 238 coordinates Zn(2+). Catalysis depends on histidine 248, which acts as the Proton donor. Histidine 275 lines the Zn(2+) pocket. 275–277 (HVH) is a binding site for substrate. Residue histidine 277 participates in Fe cation binding. N-linked (GlcNAc...) asparagine glycosylation is found at asparagine 291 and asparagine 348.

This sequence belongs to the metallophosphoesterase superfamily. Purple acid phosphatase family. Homodimer. The cofactor is Fe cation. It depends on Zn(2+) as a cofactor. As to expression, specifically expressed in flowers.

The protein localises to the secreted. It carries out the reaction a phosphate monoester + H2O = an alcohol + phosphate. This Arabidopsis thaliana (Mouse-ear cress) protein is Purple acid phosphatase 19 (PAP19).